Here is a 320-residue protein sequence, read N- to C-terminus: Foldase protein PrsA (320 aa).

The first 20 residues, 1–20 (MKMINKLIVPVTASALLLGA), serve as a signal peptide directing secretion. Cys-21 carries the N-palmitoyl cysteine lipid modification. Residue Cys-21 is the site of S-diacylglycerol cysteine attachment. The PpiC domain maps to 139–245 (EDSKKASHIL…FGYHIIKADK (107 aa)). Residues 159–198 (EGLDDKEAKQKAEEIQKEVSKDPSKFGEIAKKESMDTGSA) are disordered.

It belongs to the PrsA family.

It localises to the cell membrane. It catalyses the reaction [protein]-peptidylproline (omega=180) = [protein]-peptidylproline (omega=0). Functionally, plays a major role in protein secretion by helping the post-translocational extracellular folding of several secreted proteins. The sequence is that of Foldase protein PrsA from Staphylococcus aureus (strain bovine RF122 / ET3-1).